The following is a 167-amino-acid chain: HTH-type transcriptional repressor IacR (167 aa).

Positions 1–10 are enriched in polar residues; that stretch reads MSNAKNTSAA. The tract at residues 1 to 25 is disordered; the sequence is MSNAKNTSAASPARKGHSHHDPASD. Positions 30-162 constitute an HTH marR-type domain; that stretch reads EDFPFYWLAR…LNRMLEVVFH (133 aa). Residues 76–99 constitute a DNA-binding region (H-T-H motif); that stretch reads ISEISTHAIAKLSTITKIVYRMKE.

With respect to regulation, exposure to indole-3-acetic acid (IAA) probably relieves the repressor activity. Functionally, probably acts as a repressor of iacA expression. This is HTH-type transcriptional repressor IacR from Pseudomonas putida (Arthrobacter siderocapsulatus).